Consider the following 158-residue polypeptide: Transcription elongation factor GreA (158 aa).

The protein belongs to the GreA/GreB family.

Functionally, necessary for efficient RNA polymerase transcription elongation past template-encoded arresting sites. The arresting sites in DNA have the property of trapping a certain fraction of elongating RNA polymerases that pass through, resulting in locked ternary complexes. Cleavage of the nascent transcript by cleavage factors such as GreA or GreB allows the resumption of elongation from the new 3'terminus. GreA releases sequences of 2 to 3 nucleotides. The sequence is that of Transcription elongation factor GreA from Psychrobacter arcticus (strain DSM 17307 / VKM B-2377 / 273-4).